Consider the following 91-residue polypeptide: Small ribosomal subunit protein uS19 (91 aa).

It belongs to the universal ribosomal protein uS19 family.

Protein S19 forms a complex with S13 that binds strongly to the 16S ribosomal RNA. The sequence is that of Small ribosomal subunit protein uS19 from Ralstonia nicotianae (strain ATCC BAA-1114 / GMI1000) (Ralstonia solanacearum).